Reading from the N-terminus, the 90-residue chain is Elongation factor 1-beta (90 aa).

It belongs to the EF-1-beta/EF-1-delta family.

In terms of biological role, promotes the exchange of GDP for GTP in EF-1-alpha/GDP, thus allowing the regeneration of EF-1-alpha/GTP that could then be used to form the ternary complex EF-1-alpha/GTP/AAtRNA. The polypeptide is Elongation factor 1-beta (Sulfolobus acidocaldarius (strain ATCC 33909 / DSM 639 / JCM 8929 / NBRC 15157 / NCIMB 11770)).